The sequence spans 304 residues: Non-specific ribonucleoside hydrolase RihC (304 aa).

Histidine 233 is an active-site residue.

It belongs to the IUNH family. RihC subfamily.

Its function is as follows. Hydrolyzes both purine and pyrimidine ribonucleosides with a broad-substrate specificity. This chain is Non-specific ribonucleoside hydrolase RihC, found in Escherichia coli (strain SE11).